The following is a 248-amino-acid chain: Proteasome subunit alpha type-7 (248 aa).

O-linked (GlcNAc) serine glycosylation occurs at Ser130. The residue at position 153 (Tyr153) is a Phosphotyrosine.

Belongs to the peptidase T1A family. In terms of assembly, the 26S proteasome consists of a 20S proteasome core and two 19S regulatory subunits. The 20S proteasome core is a barrel-shaped complex made of 28 subunits that are arranged in four stacked rings. The two outer rings are each formed by seven alpha subunits, and the two inner rings are formed by seven beta subunits. The proteolytic activity is exerted by three beta-subunits PSMB5, PSMB6 and PSMB7. PSMA7 interacts directly with the PSMG1-PSMG2 heterodimer which promotes 20S proteasome assembly. Interacts with HIF1A. Interacts with RAB7A. Interacts with PRKN. Interacts with ABL1 and ABL2. Interacts with EMAP2. Interacts with MAVS.

It is found in the cytoplasm. The protein localises to the nucleus. Its function is as follows. Component of the 20S core proteasome complex involved in the proteolytic degradation of most intracellular proteins. This complex plays numerous essential roles within the cell by associating with different regulatory particles. Associated with two 19S regulatory particles, forms the 26S proteasome and thus participates in the ATP-dependent degradation of ubiquitinated proteins. The 26S proteasome plays a key role in the maintenance of protein homeostasis by removing misfolded or damaged proteins that could impair cellular functions, and by removing proteins whose functions are no longer required. Associated with the PA200 or PA28, the 20S proteasome mediates ubiquitin-independent protein degradation. This type of proteolysis is required in several pathways including spermatogenesis (20S-PA200 complex) or generation of a subset of MHC class I-presented antigenic peptides (20S-PA28 complex). Inhibits the transactivation function of HIF-1A under both normoxic and hypoxia-mimicking conditions. The interaction with EMAP2 increases the proteasome-mediated HIF-1A degradation under the hypoxic conditions. Plays a role in hepatitis C virus internal ribosome entry site-mediated translation. Mediates nuclear translocation of the androgen receptor (AR) and thereby enhances androgen-mediated transactivation. Promotes MAVS degradation and thereby negatively regulates MAVS-mediated innate immune response. This chain is Proteasome subunit alpha type-7 (PSMA7), found in Pongo abelii (Sumatran orangutan).